The primary structure comprises 504 residues: ATP synthase subunit alpha 2 (504 aa).

Residue 169–176 (GDRQTGKT) participates in ATP binding.

Belongs to the ATPase alpha/beta chains family. As to quaternary structure, F-type ATPases have 2 components, CF(1) - the catalytic core - and CF(0) - the membrane proton channel. CF(1) has five subunits: alpha(3), beta(3), gamma(1), delta(1), epsilon(1). CF(0) has three main subunits: a(1), b(2) and c(9-12). The alpha and beta chains form an alternating ring which encloses part of the gamma chain. CF(1) is attached to CF(0) by a central stalk formed by the gamma and epsilon chains, while a peripheral stalk is formed by the delta and b chains.

The protein resides in the cell membrane. The catalysed reaction is ATP + H2O + 4 H(+)(in) = ADP + phosphate + 5 H(+)(out). Its function is as follows. Produces ATP from ADP in the presence of a proton gradient across the membrane. The alpha chain is a regulatory subunit. The polypeptide is ATP synthase subunit alpha 2 (Listeria welshimeri serovar 6b (strain ATCC 35897 / DSM 20650 / CCUG 15529 / CIP 8149 / NCTC 11857 / SLCC 5334 / V8)).